Consider the following 57-residue polypeptide: Andropin (57 aa).

Residues 1–23 (MKYFVVLVVLALILAISVGPSDA) form the signal peptide.

This sequence belongs to the andropin family. Ejaculatory duct of adult males.

The protein resides in the secreted. Functionally, male-specific peptide with moderate activity against Gram-positive bacteria. This Drosophila melanogaster (Fruit fly) protein is Andropin (Anp).